The primary structure comprises 155 residues: Rusticyanin (155 aa).

The Plastocyanin-like domain maps to 53 to 155 (SFEVHDKKNP…TGMFGKIIVK (103 aa)). Positions 85, 138, 143, and 148 each coordinate Cu cation.

Monomer. It depends on Cu cation as a cofactor.

Its subcellular location is the periplasm. In terms of biological role, electron carrier from cytochrome c552 to the A-type oxidase. The protein is Rusticyanin (rus) of Acidithiobacillus ferrooxidans (Thiobacillus ferrooxidans).